The chain runs to 193 residues: MSAKQPNRKPTGKRKESDASALDGRERKRAAKRKGLKAGSRQQAEQSSKNNNGKQAKDPRIGSRKPVALIVDEKGAKPVAPKPAKEKKLVMTPEQELAAIENDDRLNDLLDRLDAGETLEATEQAWVDQRVDRYQELMDELGIIDNDDDEEDDGSFDDASYEAPTQPASEEELWDRFTQVDYQPEPKPEPKKK.

Basic residues predominate over residues 1 to 12 (MSAKQPNRKPTG). Disordered stretches follow at residues 1–91 (MSAK…KLVM) and 143–193 (IIDN…PKKK). A compositionally biased stretch (basic and acidic residues) spans 13-26 (KRKESDASALDGRE). Over residues 27–36 (RKRAAKRKGL) the composition is skewed to basic residues. Over residues 40-54 (SRQQAEQSSKNNNGK) the composition is skewed to polar residues. Residues 145–160 (DNDDDEEDDGSFDDAS) are compositionally biased toward acidic residues. A compositionally biased stretch (basic and acidic residues) spans 184 to 193 (PEPKPEPKKK).

The protein belongs to the YihI family. Interacts with Der.

In terms of biological role, a GTPase-activating protein (GAP) that modifies Der/EngA GTPase function. May play a role in ribosome biogenesis. This is Der GTPase-activating protein YihI from Aeromonas salmonicida (strain A449).